Consider the following 1013-residue polypeptide: Receptor-type tyrosine-protein phosphatase N2 (1013 aa).

An N-terminal signal peptide occupies residues 1 to 19; the sequence is MALPLLLLLLLLLPPRVLP. Positions 1–419 are involved in localization to secretory granules; interaction with CPE; sequence MALPLLLLLL…PGALPFAKPL (419 aa). Residues 20 to 613 are Extracellular-facing; sequence AAPSSVPHGR…QAEQEDSTKF (594 aa). 4 disordered regions span residues 116-137, 273-302, 342-382, and 401-487; these read RHPE…ERRY, MPRP…TGEG, DHRG…VQDD, and LQDH…SLPA. Basic and acidic residues predominate over residues 419–430; it reads LKMERKKSERPE. Ser-434 and Ser-435 each carry phosphoserine. Asn-562 carries an N-linked (GlcNAc...) asparagine glycan. Residues 614 to 634 traverse the membrane as a helical segment; sequence IALTLVSLACILGVLLASGLI. Over 635–1013 the chain is Cytoplasmic; the sequence is YCLRHSSQHR…VNAILKALPQ (379 aa). Residues 664–673 carry the Tyrosine-based internalization motif motif; that stretch reads YQELCRQRMA. The disordered stretch occupies residues 673–717; the sequence is ATRPPDRPEGPHTSRISSVSSQFSDGPMPSPSARSSASSWSEEPV. The span at 686–696 shows a compositional bias: polar residues; that stretch reads SRISSVSSQFS. Ser-690 and Ser-696 each carry phosphoserine. Residues 703–717 show a composition bias toward low complexity; that stretch reads PSARSSASSWSEEPV. One can recognise a Tyrosine-protein phosphatase domain in the interval 743–1003; that stretch reads LEKEWEALCA…EFALTAVAEE (261 aa). Residues Asp-911 and 943–949 each bind substrate; that span reads CSDGAGR. Cys-943 serves as the catalytic Phosphocysteine intermediate. The residue at position 968 (Lys-968) is an N6-acetyllysine. Residue Gln-988 coordinates substrate. A Leucine-based sorting signal motif is present at residues 1002–1008; sequence EEVNAIL.

Belongs to the protein-tyrosine phosphatase family. Receptor class 8 subfamily. As to quaternary structure, self-associates. Interacts (via cytoplasmic domain) with PTPRN (via cytoplasmic domain). Interacts (precursor form) with CPE. Interacts with HAP1. Interacts with AP2A1 or AP2A2 and AP1G1; indicative for an association with adaptor protein complex 2 (AP-2) and adaptor protein complex 1 (AP-1). Interacts with AP2M1; indicative for an association with adaptor protein complex 2 (AP-2). Interacts with MYO5A. In terms of processing, subject to proteolytic cleavage at multiple sites. In terms of tissue distribution, detected in pancreatic islets and adrenal medulla.

The protein resides in the cytoplasmic vesicle. It localises to the secretory vesicle membrane. Its subcellular location is the secretory vesicle. It is found in the synaptic vesicle membrane. It catalyses the reaction O-phospho-L-tyrosyl-[protein] + H2O = L-tyrosyl-[protein] + phosphate. Plays a role in vesicle-mediated secretory processes. Required for normal accumulation of secretory vesicles in hippocampus, pituitary and pancreatic islets. Required for the accumulation of normal levels of insulin-containing vesicles and preventing their degradation. Plays a role in insulin secretion in response to glucose stimuli. Required for normal accumulation of the neurotransmitters norepinephrine, dopamine and serotonin in the brain. In females, but not in males, required for normal accumulation and secretion of pituitary hormones, such as luteinizing hormone (LH) and follicle-stimulating hormone (FSH). Required to maintain normal levels of renin expression and renin release. May regulate catalytic active protein-tyrosine phosphatases such as PTPRA through dimerization. Has phosphatidylinositol phosphatase activity; the PIPase activity is involved in its ability to regulate insulin secretion. Can dephosphorylate phosphatidylinositol 4,5-biphosphate, phosphatidylinositol 5-phosphate and phosphatidylinositol 3-phosphate. Regulates PI(4,5)P2 level in the plasma membrane and localization of cofilin at the plasma membrane and thus is indirectly involved in regulation of actin dynamics related to cell migration and metastasis; upon hydrolysis of PI(4,5)P2 cofilin is released from the plasma membrane and acts in the cytoplasm in severing F-actin filaments. The sequence is that of Receptor-type tyrosine-protein phosphatase N2 (PTPRN2) from Macaca nemestrina (Pig-tailed macaque).